The sequence spans 219 residues: 7-cyano-7-deazaguanine synthase (219 aa).

An ATP-binding site is contributed by 8–18; it reads LSGGMDSAVLL. Zn(2+) is bound by residues Cys-185, Cys-193, Cys-196, and Cys-199.

This sequence belongs to the QueC family. Requires Zn(2+) as cofactor.

The catalysed reaction is 7-carboxy-7-deazaguanine + NH4(+) + ATP = 7-cyano-7-deazaguanine + ADP + phosphate + H2O + H(+). It functions in the pathway purine metabolism; 7-cyano-7-deazaguanine biosynthesis. In terms of biological role, catalyzes the ATP-dependent conversion of 7-carboxy-7-deazaguanine (CDG) to 7-cyano-7-deazaguanine (preQ(0)). The sequence is that of 7-cyano-7-deazaguanine synthase from Desulfotalea psychrophila (strain LSv54 / DSM 12343).